A 261-amino-acid polypeptide reads, in one-letter code: Trifolitoxin immunity protein (261 aa).

In terms of biological role, required for TFX resistance. The protein is Trifolitoxin immunity protein (tfxG) of Rhizobium leguminosarum bv. trifolii.